The sequence spans 430 residues: Neuropeptide FF receptor 1 (430 aa).

The disordered stretch occupies residues 1 to 20; the sequence is MEGEPSQPPNSSWPLSQNGT. Residues 1 to 43 are Extracellular-facing; the sequence is MEGEPSQPPNSSWPLSQNGTNTEATPATNLTFSSYYQHTSPVA. Residues 9–20 show a composition bias toward polar residues; it reads PNSSWPLSQNGT. 3 N-linked (GlcNAc...) asparagine glycosylation sites follow: Asn-10, Asn-18, and Asn-29. The helical transmembrane segment at 44–64 threads the bilayer; it reads AMFIVAYALIFLLCMVGNTLV. The Cytoplasmic portion of the chain corresponds to 65–80; it reads CFIVLKNRHMHTVTNM. The chain crosses the membrane as a helical span at residues 81-101; that stretch reads FILNLAVSDLLVGIFCMPTTL. Residues 102-117 are Extracellular-facing; sequence VDNLITGWPFDNATCK. The N-linked (GlcNAc...) asparagine glycan is linked to Asn-113. A disulfide bridge connects residues Cys-116 and Cys-203. The helical transmembrane segment at 118–138 threads the bilayer; that stretch reads MSGLVQGMSVSASVFTLVAIA. Residues 139–158 lie on the Cytoplasmic side of the membrane; the sequence is VERFRCIVHPFREKLTLRKA. A helical membrane pass occupies residues 159 to 179; it reads LVTIAVIWALALLIMCPSAVT. The Extracellular segment spans residues 180-214; it reads LTVTREEHHFMVDARNRSYPLYSCWEAWPEKGMRR. Residue Asn-195 is glycosylated (N-linked (GlcNAc...) asparagine). Residues 215–235 form a helical membrane-spanning segment; it reads VYTTVLFSHIYLAPLALIVVM. Residues 236–271 are Cytoplasmic-facing; the sequence is YARIARKLCQAPGPAPGGEEAADPRASRRRARVVHM. The chain crosses the membrane as a helical span at residues 272–292; that stretch reads LVMVALFFTLSWLPLWALLLL. The Extracellular segment spans residues 293–307; it reads IDYGQLSAPQLHLVT. A helical membrane pass occupies residues 308-328; that stretch reads VYAFPFAHWLAFFNSSANPII. The Cytoplasmic portion of the chain corresponds to 329–430; that stretch reads YGYFNENFRR…LPLTIPAWDI (102 aa). Over residues 379 to 404 the composition is skewed to low complexity; that stretch reads SDSGLPSESGPSSGAPRPGRLPLRNG. The tract at residues 379-413 is disordered; sequence SDSGLPSESGPSSGAPRPGRLPLRNGRVAHHGLPR.

This sequence belongs to the G-protein coupled receptor 1 family.

It is found in the cell membrane. In terms of biological role, receptor for NPAF (A-18-F-amide) and NPFF (F-8-F-amide) neuropeptides, also known as morphine-modulating peptides. Can also be activated by a variety of naturally occurring or synthetic FMRF-amide like ligands. This receptor mediates its action by association with G proteins that activate a phosphatidylinositol-calcium second messenger system. The sequence is that of Neuropeptide FF receptor 1 from Homo sapiens (Human).